The following is a 464-amino-acid chain: C-terminal processing peptidase, chloroplastic (464 aa).

Residues 1 to 32 constitute a chloroplast transit peptide; it reads MHSRTNCLQTSVRAPQPHFRPFTAVKTCRQRC. The N-terminal 45 residues, 33–77, are a transit peptide targeting the thylakoid; that stretch reads STTAAAAKRDQAQEQQPWIQVGLGLAAAATAVAVGLGAAALPAQA. The PDZ domain maps to 149–234; it reads LAALRRGTAG…SQVEVVLHAP (86 aa). Residues Ser-372 and Lys-397 each act as charge relay system in the active site.

Belongs to the peptidase S41A family. Monomer.

It is found in the plastid. The protein localises to the chloroplast thylakoid lumen. The catalysed reaction is The enzyme shows specific recognition of a C-terminal tripeptide, Xaa-Yaa-Zaa, in which Xaa is preferably Ala or Leu, Yaa is preferably Ala or Tyr, and Zaa is preferably Ala, but then cleaves at a variable distance from the C-terminus. A typical cleavage is -Ala-Ala-|-Arg-Ala-Ala-Lys-Glu-Asn-Tyr-Ala-Leu-Ala-Ala.. With respect to regulation, not inhibited by antipain, 4-amidinophenylmethanesulfonyl fluoride, aprotinin, chymostatin, 3,4-dichloroisocoumarin, diisopropyl fluorophosphate, E64, EDTA, EGTA, iodoacetamide, leupeptin, pepstatin, o-phenanthroline, N-ethylmaleimide, phosphoramidon or phenylmethylsulfonyl fluoride. Protease involved in the C-terminal processing of the chloroplastic D1 protein of photosystem II. This proteolytic processing is necessary to allow the light-driven assembly of the tetranuclear manganese cluster, which is responsible for photosynthetic water oxidation. The sequence is that of C-terminal processing peptidase, chloroplastic (ctpA) from Tetradesmus obliquus (Green alga).